An 838-amino-acid chain; its full sequence is Semaphorin-4G (838 aa).

The first 17 residues, 1–17, serve as a signal peptide directing secretion; it reads MWGRLWPLLLSILTATA. Residues 18-675 lie on the Extracellular side of the membrane; the sequence is VPGPSLRRPS…GAQLAPDVRL (658 aa). A Sema domain is found at 35–505; it reads RMTIPYEELS…APSGVIQLPL (471 aa). N-linked (GlcNAc...) asparagine glycosylation is found at asparagine 55, asparagine 111, and asparagine 126. A disulfide bond links cysteine 104 and cysteine 115. Cystine bridges form between cysteine 133–cysteine 142, cysteine 270–cysteine 377, and cysteine 294–cysteine 337. Asparagine 388 carries an N-linked (GlcNAc...) asparagine glycan. Residues 507-558 enclose the PSI domain; the sequence is SCSRYRSCYDCILARDPYCGWDPGTHACAAATTIANRTALIQDIERGNRGCE. Disulfide bonds link cysteine 508-cysteine 525 and cysteine 517-cysteine 534. Residues asparagine 542 and asparagine 598 are each glycosylated (N-linked (GlcNAc...) asparagine). Residues 567 to 649 enclose the Ig-like C2-type domain; it reads PPLKTRSVLR…RTLLASYSLT (83 aa). Cysteine 584 and cysteine 632 are oxidised to a cystine. Residues 676–696 traverse the membrane as a helical segment; sequence LYVLAIAALGGLCLILASSLL. The Cytoplasmic portion of the chain corresponds to 697 to 838; it reads YVACLREGRR…LVEQLDESSV (142 aa). The tract at residues 723 to 777 is disordered; sequence SAVQLQTVSGQCPGEEDEGDDEGAGGLEGSCLQIIPGEGAPAPPPPPPPPPPAEL. Acidic residues predominate over residues 736-745; the sequence is GEEDEGDDEG. The segment covering 763–775 has biased composition (pro residues); it reads PAPPPPPPPPPPA. 2 positions are modified to phosphoserine: serine 795 and serine 837.

Belongs to the semaphorin family. In terms of assembly, interacts with PLXNB2.

It is found in the cell membrane. Its function is as follows. Cell surface receptor for PLXNB2. May play a role in axon guidance. This is Semaphorin-4G (SEMA4G) from Homo sapiens (Human).